The chain runs to 842 residues: ATP-binding cassette sub-family B member 6 (842 aa).

Residues 1 to 26 are Lumenal-facing; the sequence is MVTVGNYCEAEGPLGPAWAQNGLSPC. The segment at 1-205 is required for the lysosomal targeting; that stretch reads MVTVGNYCEA…SGGLFILGLW (205 aa). The segment at 1–236 is required for ATPase activity; that stretch reads MVTVGNYCEA…RNQAQSTDRT (236 aa). Cysteines 8 and 26 form a disulfide. The helical transmembrane segment at 27–47 threads the bilayer; that stretch reads FFFTLVPSTLMALGALALVLV. The Cytoplasmic portion of the chain corresponds to 48-72; that stretch reads LPCRRRDVPSGTEELFWAADSRVAP. Residues 73 to 93 traverse the membrane as a helical segment; sequence YALQLFLATLQVALPLAGLAG. Over 94–106 the chain is Lumenal; that stretch reads RVGTARGVRLPGY. A helical transmembrane segment spans residues 107 to 127; the sequence is LLLASMLGSLASACGLWLLVA. Over 128 to 147 the chain is Cytoplasmic; it reads ERRQARQSLAMGVWMKFRHS. A helical transmembrane segment spans residues 148–168; it reads SGLLLLWTVAFAAENLALVSW. The Lumenal portion of the chain corresponds to 169-185; it reads NSPQWWWARADLGQQVQ. The helical transmembrane segment at 186–206 threads the bilayer; it reads FGLWVLRYVISGGLFILGLWA. Over 207–263 the chain is Cytoplasmic; the sequence is PGLRPQSYTLRVHEADQDVERNQAQSTDRTSTWRDLGRKLRLLSSYLWPRGSPALQF. A helical transmembrane segment spans residues 264 to 284; sequence IVLICLGLMGLDRALNVLVPI. The region spanning 265-556 is the ABC transmembrane type-1 domain; the sequence is VLICLGLMGL…FGTYYRMIQT (292 aa). The Lumenal segment spans residues 285 to 305; sequence FYRDIVNLLTSKAPWSSLAWT. A helical transmembrane segment spans residues 306–326; that stretch reads VTTYVFLKFLQGGGTGSTGFV. Topologically, residues 327–375 are cytoplasmic; the sequence is SNLRTFLWIRVQQFTSRGVELRLFSHLHELSLRWHLGRRTGEVLRVVDR. A helical transmembrane segment spans residues 376–396; that stretch reads GTSSVTGLLSYLVFNIIPTLA. A topological domain (lumenal) is located at residue aspartate 397. The helical transmembrane segment at 398–418 threads the bilayer; the sequence is IIIGIIYFSMFFNAWFGLIVF. At 419–499 the chain is on the cytoplasmic side; sequence LCMSLYLFLT…SSASLVVLNQ (81 aa). The helical transmembrane segment at 500–520 threads the bilayer; sequence TQNLVIGLGLLAGSLLCAYFV. Residues 521 to 529 lie on the Lumenal side of the membrane; it reads SEQKLQVGD. Residues 530–550 traverse the membrane as a helical segment; that stretch reads FVLFGTYITQLYMPLNWFGTY. Residues 551-842 lie on the Cytoplasmic side of the membrane; sequence YRMIQTNFID…SEDSKPQDIA (292 aa). One can recognise an ABC transporter domain in the interval 590–824; it reads IEFENVHFSY…GGVYAEMWQL (235 aa). 623 to 630 serves as a coordination point for ATP; the sequence is GPSGAGKS.

The protein belongs to the ABC transporter superfamily. ABCB family. Heavy Metal importer (TC 3.A.1.210) subfamily. As to quaternary structure, homodimer. N-glycosylated. Highly expressed in the liver, adrenal glands, and testis.

The protein resides in the cell membrane. It is found in the mitochondrion outer membrane. It localises to the endoplasmic reticulum membrane. The protein localises to the golgi apparatus membrane. Its subcellular location is the endosome membrane. The protein resides in the lysosome membrane. It is found in the late endosome membrane. It localises to the early endosome membrane. The protein localises to the secreted. Its subcellular location is the extracellular exosome. The protein resides in the mitochondrion. It is found in the endosome. It localises to the multivesicular body membrane. The protein localises to the melanosome membrane. It carries out the reaction heme b(in) + ATP + H2O = heme b(out) + ADP + phosphate + H(+). It catalyses the reaction coproporphyrin III(in) + ATP + H2O = coproporphyrin III(out) + ADP + phosphate + H(+). The enzyme catalyses pheophorbide a(in) + ATP + H2O = pheophorbide a(out) + ADP + phosphate + H(+). The catalysed reaction is coproporphyrinogen III(in) + ATP + H2O = coproporphyrinogen III(out) + ADP + phosphate + H(+). It carries out the reaction protoporphyrin IX(in) + ATP + H2O = protoporphyrin IX(out) + ADP + phosphate + H(+). It catalyses the reaction coproporphyrin I(in) + ATP + H2O = coproporphyrin I(out) + ADP + phosphate + H(+). The enzyme catalyses uroporphyrin I(in) + ATP + H2O = uroporphyrin I(out) + ADP + phosphate + H(+). The catalysed reaction is uroporphyrin III(in) + ATP + H2O = uroporphyrin III(out) + ADP + phosphate + H(+). Its function is as follows. ATP-dependent transporter that catalyzes the transport of a broad-spectrum of porphyrins from the cytoplasm to the extracellular space through the plasma membrane or into the vesicle lumen. May also function as an ATP-dependent importer of porphyrins from the cytoplasm into the mitochondria, in turn may participate in the de novo heme biosynthesis regulation and in the coordination of heme and iron homeostasis during phenylhydrazine stress. May also play a key role in the early steps of melanogenesis producing PMEL amyloid fibrils. In vitro, it confers to cells a resistance to toxic metal such as arsenic and cadmium and against chemotherapeutics agent such as 5-fluorouracil, SN-38 and vincristin. In addition may play a role in the transition metal homeostasis. In Mesocricetus auratus (Golden hamster), this protein is ATP-binding cassette sub-family B member 6.